We begin with the raw amino-acid sequence, 264 residues long: Acetylglutamate kinase (264 aa).

Substrate-binding positions include 50-51, Arg72, and Asn164; that span reads GG.

The protein belongs to the acetylglutamate kinase family. ArgB subfamily.

It is found in the cytoplasm. It carries out the reaction N-acetyl-L-glutamate + ATP = N-acetyl-L-glutamyl 5-phosphate + ADP. It participates in amino-acid biosynthesis; L-arginine biosynthesis; N(2)-acetyl-L-ornithine from L-glutamate: step 2/4. Catalyzes the ATP-dependent phosphorylation of N-acetyl-L-glutamate. This chain is Acetylglutamate kinase, found in Moritella profunda.